We begin with the raw amino-acid sequence, 226 residues long: MGISDNDVQKQLRHMMAFIEQEANEKAEEIDAKAEEEFNIEKGRLVQQQRQKIMEFFEKKEKQVELQRKIQASNSLNAGRLRCLKAREDHIGAVLDEARSNLSRISGDAARYPAILKGLVMQGLLQLLEKEVVLRCREKDLRLVEQLLPECLDGLQKEWGSTTKVVLDKQNFLPSESAGGVELSARAGKIKVSSTLESRLELIANQIVPQVRTALFGPNPNRSFFD.

The protein belongs to the V-ATPase E subunit family. As to quaternary structure, V-ATPase is a heteromultimeric enzyme made up of two complexes: the ATP-hydrolytic V1 complex and the proton translocation V0 complex. The V1 complex consists of three catalytic AB heterodimers that form a heterohexamer, three peripheral stalks each consisting of EG heterodimers, one central rotor including subunits D and F, and the regulatory subunits C and H. The proton translocation complex V0 consists of the proton transport subunit a, a ring of proteolipid subunits c9c'', rotary subunit d, subunits e and f, and the accessory subunits vah-19/Ac45 and vah-20/PRR. As to expression, expressed in the excretory cell and syncytial hypodermal cells (at protein level). Expressed in the intestine (at protein level).

It is found in the cytoplasm. Its subcellular location is the apical cell membrane. In terms of biological role, subunit of the V1 complex of vacuolar(H+)-ATPase (V-ATPase), a multisubunit enzyme composed of a peripheral complex (V1) that hydrolyzes ATP and a membrane integral complex (V0) that translocates protons. V-ATPase is responsible for acidifying and maintaining the pH of intracellular compartments and in some cell types, is targeted to the plasma membrane, where it is responsible for acidifying the extracellular environment. Regulates pH homeostasis in the intestine. Probably by regulating cytoplasmic pH, required for cell survival in the intestine and hypodermis. Involved in receptor-mediated endocytosis. Involved in embryogenesis and larval development. The polypeptide is V-type proton ATPase subunit E (Caenorhabditis elegans).